The following is a 196-amino-acid chain: UMP-CMP kinase (196 aa).

Residue Gly13–Thr18 participates in ATP binding. Ser33 bears the Phosphoserine mark. Residues Ser33–Val63 are NMP. Arg39 contributes to the a ribonucleoside 5'-phosphate binding site. An N6-acetyllysine mark is found at Lys43 and Lys55. Position 61–63 (Lys61–Val63) interacts with a ribonucleoside 5'-phosphate. A Glycyl lysine isopeptide (Lys-Gly) (interchain with G-Cter in SUMO2) cross-link involves residue Lys73. Residue Gly93–Arg96 participates in a ribonucleoside 5'-phosphate binding. Asn100 serves as a coordination point for CMP. Lys106 carries the post-translational modification N6-succinyllysine. The interval Glu133–Asp143 is LID. ATP is bound at residue Arg134. Positions 140 and 151 each coordinate a ribonucleoside 5'-phosphate. Residue Lys179 coordinates ATP. A Phosphoserine modification is found at Ser180.

Belongs to the adenylate kinase family. UMP-CMP kinase subfamily. As to quaternary structure, monomer. Requires Mg(2+) as cofactor.

It is found in the nucleus. The protein localises to the cytoplasm. The enzyme catalyses CMP + ATP = CDP + ADP. The catalysed reaction is dCMP + ATP = dCDP + ADP. It catalyses the reaction UMP + ATP = UDP + ADP. It carries out the reaction a 2'-deoxyribonucleoside 5'-diphosphate + ATP = a 2'-deoxyribonucleoside 5'-triphosphate + ADP. The enzyme catalyses a ribonucleoside 5'-diphosphate + ATP = a ribonucleoside 5'-triphosphate + ADP. Its function is as follows. Catalyzes the phosphorylation of pyrimidine nucleoside monophosphates at the expense of ATP. Plays an important role in de novo pyrimidine nucleotide biosynthesis. Has preference for UMP and CMP as phosphate acceptors. Also displays broad nucleoside diphosphate kinase activity. The chain is UMP-CMP kinase (Cmpk1) from Mus musculus (Mouse).